The sequence spans 96 residues: Protein RnfH (96 aa).

Belongs to the UPF0125 (RnfH) family.

The sequence is that of Protein RnfH from Hahella chejuensis (strain KCTC 2396).